A 214-amino-acid chain; its full sequence is 3,4-dihydroxy-2-butanone 4-phosphate synthase (214 aa).

D-ribulose 5-phosphate contacts are provided by residues 37 to 38, D42, 150 to 154, and E174; these read RE and RRGHT. Residue E38 participates in Mg(2+) binding. H153 is a Mg(2+) binding site.

The protein belongs to the DHBP synthase family. As to quaternary structure, homodimer. It depends on Mg(2+) as a cofactor. Mn(2+) serves as cofactor.

The enzyme catalyses D-ribulose 5-phosphate = (2S)-2-hydroxy-3-oxobutyl phosphate + formate + H(+). It functions in the pathway cofactor biosynthesis; riboflavin biosynthesis; 2-hydroxy-3-oxobutyl phosphate from D-ribulose 5-phosphate: step 1/1. Catalyzes the conversion of D-ribulose 5-phosphate to formate and 3,4-dihydroxy-2-butanone 4-phosphate. The sequence is that of 3,4-dihydroxy-2-butanone 4-phosphate synthase from Histophilus somni (strain 2336) (Haemophilus somnus).